The primary structure comprises 287 residues: Heterodimeric geranylgeranyl pyrophosphate synthase small subunit 2, chloroplastic (287 aa).

2 residues coordinate Mg(2+): Glu103 and Asp109. 3 residues coordinate dimethylallyl diphosphate: Lys204, Gln241, and Lys250.

The protein belongs to the FPP/GGPP synthase family. As to quaternary structure, part of a heterodimeric geranyl(geranyl)diphosphate synthase. Mg(2+) serves as cofactor. Mainly expressed in trichomes, and, to a lower extent, in roots, leaves, flowers and stems.

It localises to the plastid. Its subcellular location is the chloroplast thylakoid membrane. Functionally, heterodimeric geranyl(geranyl)-diphosphate (GPP) synthase small subunit. The small subunit alone is inactive in vitro while the large subunit GGPPS1 catalyzes mainly the production of geranygeranyl-diphosphate in vitro. Upon association of the two subunits, the product profile changes and the production of gerany-diphosphate is strongly increased. This Cannabis sativa (Hemp) protein is Heterodimeric geranylgeranyl pyrophosphate synthase small subunit 2, chloroplastic.